Here is a 219-residue protein sequence, read N- to C-terminus: Small ribosomal subunit protein uS3 (219 aa).

The region spanning 38 to 106 (IRKFIEKRLV…RVHINIVEIK (69 aa)) is the KH type-2 domain.

Belongs to the universal ribosomal protein uS3 family. As to quaternary structure, part of the 30S ribosomal subunit. Forms a tight complex with proteins S10 and S14.

Its function is as follows. Binds the lower part of the 30S subunit head. Binds mRNA in the 70S ribosome, positioning it for translation. The protein is Small ribosomal subunit protein uS3 of Levilactobacillus brevis (strain ATCC 367 / BCRC 12310 / CIP 105137 / JCM 1170 / LMG 11437 / NCIMB 947 / NCTC 947) (Lactobacillus brevis).